Reading from the N-terminus, the 909-residue chain is MSEKLQAIELEKSYNPKEFEERIYSFWEANKCFSPIKKKNTKNTFTVVIPPPNVTGVLHVGHALDETLQDVIVRYHRMKGDETLWIPGTDHAGIATQSVVEKKLKAEGKNRRDLGREAFIEKVWEVKNEHHSIITKQLRKMGVSVDWDRERFTLDEGLSQAVREVFVSLYEQGLIYQGNYLVNWCPSCGTAISDDEVEHEDRKGGMYHIYYKLADGAVLQNEAGEKIQEIEIATTRPETLLGDTAIAVHPEDPRYASIIGKEVILPLANRKIPVIADSYVDKEFGTGVVKITPAHDPNDWEVGKRHNLPVLNILNPDGTLNDAVPEKYRGLSTEKARKAVIEDLEELGLFKNEEKIKHAVGCCYRCHTSIEPYVSKQWFVKMQPLAQKALDAWKKGDVVFYPQKWENTYAHWMNNIRDWCISRQLWWGHRIPVWYCADCGKTIVSRTDITECPHCKSKNIKQDEDVLDTWFSSWLWPFSTLGWPEKTEDLARFFPTSALVTGHDIIFFWVARMIMASLQFTGKAPFKDIFIHGLVRDKQGRKMSKSLGNGIDPLVAIEEFGADAMKFTLTFMCGSQSQDFLIDMESFKLGSKFANKVWNASRYILGNLAGRTIVPVGRDGSLNSLKELDRWIYHELNEAAQTVRSSLDSYRYNEAAQKVYEFFWNNFCDWYVEGTKLSFKYGDEKEKDRAASVLLAVLEESLRLLHPFLAFVTEEIYSKLPGNCAEGALPRAKILMTSDYPEEKKERIDEAASIRFRTLQEIVRNIRALRAECGIDPQLKLKVSLYIEKNSPAEAARENSEIIEMLSGLSGLDFIDSLKEKPASSIGVVGAGFEAFLITGDSIDIDQLKKRFEKELEKNEQNASKIDSKLKNENFVKNAPPEVIEGEKEKHAEFLRRIEKLKGYLEGMR.

Positions 52-62 (PNVTGVLHVGH) match the 'HIGH' region motif. Positions 542–546 (KMSKS) match the 'KMSKS' region motif. Lys-545 is a binding site for ATP. The stretch at 843–902 (IDIDQLKKRFEKELEKNEQNASKIDSKLKNENFVKNAPPEVIEGEKEKHAEFLRRIEKLK) forms a coiled coil.

It belongs to the class-I aminoacyl-tRNA synthetase family. ValS type 1 subfamily. In terms of assembly, monomer.

Its subcellular location is the cytoplasm. The enzyme catalyses tRNA(Val) + L-valine + ATP = L-valyl-tRNA(Val) + AMP + diphosphate. In terms of biological role, catalyzes the attachment of valine to tRNA(Val). As ValRS can inadvertently accommodate and process structurally similar amino acids such as threonine, to avoid such errors, it has a 'posttransfer' editing activity that hydrolyzes mischarged Thr-tRNA(Val) in a tRNA-dependent manner. This Treponema denticola (strain ATCC 35405 / DSM 14222 / CIP 103919 / JCM 8153 / KCTC 15104) protein is Valine--tRNA ligase.